The sequence spans 115 residues: MESSVKYAQEFVQRYYSSLDTNRNGIAEFYRENSLILWNGKPMQVTEFTSMIVNLPYSKTKVEDFDSQQVMGNDMNIIIVVSGTIRFDGKKPHVFSYVSFYCIYLLVLRSSTNFL.

One can recognise an NTF2 domain in the interval 7 to 115; it reads YAQEFVQRYY…LVLRSSTNFL (109 aa).

It localises to the nucleus. In terms of biological role, stimulator of protein export for NES-containing proteins. Also plays a role in mRNA nuclear export. The polypeptide is NTF2-related export protein 1 (nxt1) (Schizosaccharomyces pombe (strain 972 / ATCC 24843) (Fission yeast)).